Reading from the N-terminus, the 294-residue chain is Complement C1q tumor necrosis factor-related protein 2 (294 aa).

The signal sequence occupies residues 1–24 (MTIFKKVTTMISWVLLACALPCAA). The disordered stretch occupies residues 42–156 (QLVCSLPGPQ…PGPCSCGSSR (115 aa)). The 103-residue stretch at 48 to 150 (PGPQGPPGPP…KGEPGLPGPC (103 aa)) folds into the Collagen-like domain. Pro residues predominate over residues 50–59 (PQGPPGPPGA). A compositionally biased stretch (basic and acidic residues) spans 75–87 (DGQDGQDGDRGDS). Residues 105–129 (KGKAGAIGRAGPRGPKGVSGTPGKH) show a composition bias toward low complexity. Positions 154 to 290 (SSRAKSAFSV…GFLIYADQGD (137 aa)) constitute a C1q domain.

May interact with ERFE.

It is found in the secreted. Involved in the regulation of lipid metabolism in adipose tissue and liver. The polypeptide is Complement C1q tumor necrosis factor-related protein 2 (C1qtnf2) (Mus musculus (Mouse)).